The chain runs to 542 residues: CTP synthase (542 aa).

Positions 1-265 (MARYIFITGG…DSEVLCAFGI (265 aa)) are amidoligase domain. Ser13 serves as a coordination point for CTP. Ser13 lines the UTP pocket. 14-19 (SLGKGI) contacts ATP. Residue Tyr54 participates in L-glutamine binding. Residue Asp71 coordinates ATP. Asp71 and Glu139 together coordinate Mg(2+). CTP is bound by residues 146–148 (DIE), 186–191 (KTKPTQ), and Lys222. Residues 186 to 191 (KTKPTQ) and Lys222 each bind UTP. The Glutamine amidotransferase type-1 domain maps to 291–541 (TIAVVGKYTG…IEATVEQSRL (251 aa)). Ala353 is a binding site for L-glutamine. Cys380 acts as the Nucleophile; for glutamine hydrolysis in catalysis. L-glutamine contacts are provided by residues 381 to 384 (FGMQ), Glu404, and Arg469. Residues His514 and Glu516 contribute to the active site.

The protein belongs to the CTP synthase family. As to quaternary structure, homotetramer.

The enzyme catalyses UTP + L-glutamine + ATP + H2O = CTP + L-glutamate + ADP + phosphate + 2 H(+). It carries out the reaction L-glutamine + H2O = L-glutamate + NH4(+). The catalysed reaction is UTP + NH4(+) + ATP = CTP + ADP + phosphate + 2 H(+). The protein operates within pyrimidine metabolism; CTP biosynthesis via de novo pathway; CTP from UDP: step 2/2. With respect to regulation, allosterically activated by GTP, when glutamine is the substrate; GTP has no effect on the reaction when ammonia is the substrate. The allosteric effector GTP functions by stabilizing the protein conformation that binds the tetrahedral intermediate(s) formed during glutamine hydrolysis. Inhibited by the product CTP, via allosteric rather than competitive inhibition. Its function is as follows. Catalyzes the ATP-dependent amination of UTP to CTP with either L-glutamine or ammonia as the source of nitrogen. Regulates intracellular CTP levels through interactions with the four ribonucleotide triphosphates. The protein is CTP synthase of Bartonella quintana (strain Toulouse) (Rochalimaea quintana).